Reading from the N-terminus, the 294-residue chain is Agamous-like MADS-box protein AGL82 (294 aa).

An MADS-box domain is found at 1-51 (MVPKVVDLQRIANDKTRITTYKKRKASLYKKAQEFSTLCGVETCLIVYGPT).

In terms of assembly, interacts with MEE14/CBP1.

It is found in the nucleus. Probable transcription factor that may function in the maintenance of the proper function of the central cell in pollen tube attraction. This chain is Agamous-like MADS-box protein AGL82, found in Arabidopsis thaliana (Mouse-ear cress).